The following is a 140-amino-acid chain: Large ribosomal subunit protein uL11 (140 aa).

It belongs to the universal ribosomal protein uL11 family. As to quaternary structure, part of the ribosomal stalk of the 50S ribosomal subunit. Interacts with L10 and the large rRNA to form the base of the stalk. L10 forms an elongated spine to which L12 dimers bind in a sequential fashion forming a multimeric L10(L12)X complex. One or more lysine residues are methylated.

Forms part of the ribosomal stalk which helps the ribosome interact with GTP-bound translation factors. The sequence is that of Large ribosomal subunit protein uL11 from Geobacter metallireducens (strain ATCC 53774 / DSM 7210 / GS-15).